Reading from the N-terminus, the 516-residue chain is MAAGMVATMVLLTCLAAGGLVVGAEEDGGGGGLGRLGSPDYGDALAKAILFFEGQRSGRLPANQRATWRGDSALTDGREENVNLTGGYYDAGDNVKFGYPMAFTVTLLGWSAVEYGAAVAAAGELGNLRAAIRWGADFLLRAHASPTTLYTQVGDGNADHQCWERPEDMDTPRTLYKITADSPGSEAAAEASAALAAAYVALKDDGDTAFSSRLLAASRSLFDFANNYRGSFQSSCPFYCSYSGFQDELLWASAWLFKATRDAKYLDFLTNNQGSSNPVNEFSWDNKYAGAQMLAAQEYLGGRTQLARYKDNLDSFVCALMPNSGNVQIRTTPGGLLFTRDSVNLQYTTTATLVLSIYSKVLKSSGSRGVRCSAATFSPNQISSFATSQVDYILGKNPLGMSYMVGFSTKFPRRIHHRGSSIPSIKVLSRKVTCKEGFSSWLPTSDPNPNIHVGAIVGGPDGNDQFSDNRGDSSHSEPATYINAAFVGACAAAMGQKQVVKLEEPADNLESMVSTY.

The first 23 residues, 1-23 (MAAGMVATMVLLTCLAAGGLVVG), serve as a signal peptide directing secretion. N-linked (GlcNAc...) asparagine glycosylation is present at Asn-83. Residue Asp-93 is the Nucleophile of the active site. Catalysis depends on residues His-416, Asp-468, and Glu-477.

This sequence belongs to the glycosyl hydrolase 9 (cellulase E) family.

It localises to the secreted. It catalyses the reaction Endohydrolysis of (1-&gt;4)-beta-D-glucosidic linkages in cellulose, lichenin and cereal beta-D-glucans.. The protein is Endoglucanase 20 (GLU15) of Oryza sativa subsp. japonica (Rice).